Here is a 95-residue protein sequence, read N- to C-terminus: CRISPR-associated endoribonuclease Cas2 (95 aa).

Position 9 (aspartate 9) interacts with Mg(2+).

This sequence belongs to the CRISPR-associated endoribonuclease Cas2 protein family. Homodimer, forms a heterotetramer with a Cas1 homodimer. Mg(2+) is required as a cofactor.

Functionally, CRISPR (clustered regularly interspaced short palindromic repeat), is an adaptive immune system that provides protection against mobile genetic elements (viruses, transposable elements and conjugative plasmids). CRISPR clusters contain sequences complementary to antecedent mobile elements and target invading nucleic acids. CRISPR clusters are transcribed and processed into CRISPR RNA (crRNA). Functions as a ssRNA-specific endoribonuclease. Involved in the integration of spacer DNA into the CRISPR cassette. In Methylorubrum extorquens (strain CM4 / NCIMB 13688) (Methylobacterium extorquens), this protein is CRISPR-associated endoribonuclease Cas2.